A 512-amino-acid chain; its full sequence is Apolipoprotein N-acyltransferase (512 aa).

A run of 6 helical transmembrane segments spans residues L5–A25, F56–I76, V92–L112, L118–A138, F168–A188, and S195–A215. The CN hydrolase domain maps to L233–G477. E271 serves as the catalytic Proton acceptor. The active site involves K337. C389 (nucleophile) is an active-site residue. Residues T487–F507 traverse the membrane as a helical segment.

This sequence belongs to the CN hydrolase family. Apolipoprotein N-acyltransferase subfamily.

The protein localises to the cell inner membrane. The catalysed reaction is N-terminal S-1,2-diacyl-sn-glyceryl-L-cysteinyl-[lipoprotein] + a glycerophospholipid = N-acyl-S-1,2-diacyl-sn-glyceryl-L-cysteinyl-[lipoprotein] + a 2-acyl-sn-glycero-3-phospholipid + H(+). It functions in the pathway protein modification; lipoprotein biosynthesis (N-acyl transfer). Catalyzes the phospholipid dependent N-acylation of the N-terminal cysteine of apolipoprotein, the last step in lipoprotein maturation. This chain is Apolipoprotein N-acyltransferase, found in Neisseria meningitidis serogroup A / serotype 4A (strain DSM 15465 / Z2491).